The primary structure comprises 843 residues: Protein P (843 aa).

The terminal protein domain (TP) stretch occupies residues 1–177 (MPLSYQHFRK…FCGSPYSWEQ (177 aa)). Positions 178 to 346 (DLQHGRLVFQ…YCLYHIVNLI (169 aa)) are spacer. The interval 219–250 (RKSRLGPQPAQGQLAGRQQGGSGSIRARVHPS) is disordered. Residues 223–235 (LGPQPAQGQLAGR) show a composition bias toward low complexity. A polymerase/reverse transcriptase domain (RT) region spans residues 347-690 (EDWGPCTEHG…YLNLYPVARQ (344 aa)). Residues 357–600 (EHRIRTPRTP…YSLNFMGYVI (244 aa)) form the Reverse transcriptase domain. Mg(2+) is bound by residues Asp-429, Asp-551, and Asp-552.

This sequence belongs to the hepadnaviridae P protein family.

It carries out the reaction DNA(n) + a 2'-deoxyribonucleoside 5'-triphosphate = DNA(n+1) + diphosphate. It catalyses the reaction Endonucleolytic cleavage to 5'-phosphomonoester.. Activated by host HSP70 and HSP40 in vitro to be able to bind the epsilon loop of the pgRNA. Because deletion of the RNase H region renders the protein partly chaperone-independent, the chaperones may be needed indirectly to relieve occlusion of the RNA-binding site by this domain. Inhibited by several reverse-transcriptase inhibitors: Lamivudine, Adefovir and Entecavir. Multifunctional enzyme that converts the viral RNA genome into dsDNA in viral cytoplasmic capsids. This enzyme displays a DNA polymerase activity that can copy either DNA or RNA templates, and a ribonuclease H (RNase H) activity that cleaves the RNA strand of RNA-DNA heteroduplexes in a partially processive 3'- to 5'-endonucleasic mode. Neo-synthesized pregenomic RNA (pgRNA) are encapsidated together with the P protein, and reverse-transcribed inside the nucleocapsid. Initiation of reverse-transcription occurs first by binding the epsilon loop on the pgRNA genome, and is initiated by protein priming, thereby the 5'-end of (-)DNA is covalently linked to P protein. Partial (+)DNA is synthesized from the (-)DNA template and generates the relaxed circular DNA (RC-DNA) genome. After budding and infection, the RC-DNA migrates in the nucleus, and is converted into a plasmid-like covalently closed circular DNA (cccDNA). The activity of P protein does not seem to be necessary for cccDNA generation, and is presumably released from (+)DNA by host nuclear DNA repair machinery. This is Protein P from Hepatitis B virus genotype B2 (isolate Vietnam/16091/1992) (HBV-B).